The sequence spans 235 residues: Probable transcriptional regulatory protein Cj1172c (235 aa).

It belongs to the TACO1 family.

It localises to the cytoplasm. This Campylobacter jejuni subsp. jejuni serotype O:2 (strain ATCC 700819 / NCTC 11168) protein is Probable transcriptional regulatory protein Cj1172c.